Reading from the N-terminus, the 1888-residue chain is Eukaryotic translation initiation factor 4G (1888 aa).

10 disordered regions span residues 1 to 259, 391 to 420, 449 to 662, 726 to 761, 838 to 903, 961 to 1042, 1083 to 1138, 1331 to 1356, 1462 to 1605, and 1639 to 1691; these read MSFN…PTTP, FDNKQSNAYADTGTSGPRPPYNLPSQTQPL, PLPS…SLQH, VAHSSSPENPGLGNVKNLDLISDDNQDTSSKEKNSE, ADVS…DGEV, AYKR…SGDR, TNVS…DPRL, GEREQEEANKVEEEGEVKQSEEEREE, KWQQ…PGDL, and RFAG…PSLP. 2 stretches are compositionally biased toward polar residues: residues 13 to 36 and 75 to 84; these read GYTQYRKSGRSNNFNPQRGSSGTH and VNSTDSSNAP. Basic and acidic residues predominate over residues 171–183; that stretch reads DEQKRDQARHESF. Over residues 185–195 the composition is skewed to pro residues; the sequence is PVPPMPIPLAP. Composition is skewed to polar residues over residues 211-231, 244-259, 393-405, and 458-475; these read NVGQQLQQKDTGIINQPNTGD, ASPNHPTNQTQKPTTP, NKQSNAYADTGTS, and NSQPHRFNYPVSQGSQNV. The span at 497–506 shows a compositional bias: basic and acidic residues; it reads PNREHTRDTH. A compositionally biased stretch (polar residues) spans 586–596; sequence IKSSPVISKQF. A compositionally biased stretch (low complexity) spans 603 to 630; that stretch reads VSLESQDSSSVQSSLTASSEESELAVAH. A compositionally biased stretch (basic and acidic residues) spans 631–645; it reads SEVRRENLLGSDLHK. Residues 840-850 show a composition bias toward low complexity; sequence VSASVSSSSTV. Residues 869 to 885 are compositionally biased toward polar residues; the sequence is NMSSNEVLKNVVKSDQP. Positions 963 to 983 are enriched in basic and acidic residues; that stretch reads KRPEEKKETVAHSESIERTES. The tract at residues 1048–1093 is EIF4E-binding; the sequence is KKYSRDFLLKFAEQFLDLPHNFEVTSDIESLMSTHTNVSHHHDRDP. A compositionally biased stretch (basic and acidic residues) spans 1109–1124; sequence RLDRRGSNLVDDDRWS. The 224-residue stretch at 1239–1462 folds into the MIF4G domain; the sequence is QRQLKAILNK…KDAIDLRKNK (224 aa). Composition is skewed to basic and acidic residues over residues 1467–1484 and 1661–1674; these read RKVEGPKKIEEVHRDAAQ and KDLRHSGRSFDRSR. The MI domain maps to 1700–1824; it reads RLQQLSLTAI…SLREVADLIC (125 aa).

The protein belongs to the eukaryotic initiation factor 4G family. EIF4F is a multi-subunit complex, the composition of which varies with external and internal environmental conditions. It is composed of at least EIF4A, EIF4E and EIF4G. Interacts directly with eIF4E. In higher plants two isoforms of EIF4F have been identified, named isoform EIF4F and isoform EIF(iso)4F. Isoform EIF4F has subunits p220 and p26, whereas isoform EIF(iso)4F has subunits p82 and p28.

Its function is as follows. Component of the protein complex eIF4F, which is involved in the recognition of the mRNA cap, ATP-dependent unwinding of 5'-terminal secondary structure and recruitment of mRNA to the ribosome. In Cucumis melo (Muskmelon), this protein is Eukaryotic translation initiation factor 4G.